The chain runs to 507 residues: ATP synthase subunit alpha, chloroplastic (507 aa).

170–177 (GDRQTGKT) serves as a coordination point for ATP.

It belongs to the ATPase alpha/beta chains family. F-type ATPases have 2 components, CF(1) - the catalytic core - and CF(0) - the membrane proton channel. CF(1) has five subunits: alpha(3), beta(3), gamma(1), delta(1), epsilon(1). CF(0) has four main subunits: a, b, b' and c.

The protein resides in the plastid. Its subcellular location is the chloroplast thylakoid membrane. It catalyses the reaction ATP + H2O + 4 H(+)(in) = ADP + phosphate + 5 H(+)(out). Produces ATP from ADP in the presence of a proton gradient across the membrane. The alpha chain is a regulatory subunit. The chain is ATP synthase subunit alpha, chloroplastic from Anthoceros angustus (Hornwort).